Reading from the N-terminus, the 303-residue chain is Beta-lactamase L2 (303 aa).

Residues 1–35 constitute a signal peptide (tat-type signal); the sequence is MLARRRFLQFSGAAVASSLALPLLARAAGKTAASA. The active-site Acyl-ester intermediate is the S83. Residue 247–249 coordinates substrate; sequence KTG.

It belongs to the class-A beta-lactamase family. Post-translationally, predicted to be exported by the Tat system. The position of the signal peptide cleavage has not been experimentally proven.

It catalyses the reaction a beta-lactam + H2O = a substituted beta-amino acid. The sequence is that of Beta-lactamase L2 from Stenotrophomonas maltophilia (Pseudomonas maltophilia).